The sequence spans 261 residues: MAKLLLFLLPAILGLLIPRSAVALGTNYLLSGQTLNTDGHLKNGDFDLVMQNDCNLVLYNGNWQSNTANNGRDCKLTLTDYGELVIKNGDGSTVWRSRAKSVKGNYAAVLHPDGRLVVFGPSVFKIDPWVPGLNSLRFRNIPFTDNLLFSGQVLYGDGRLTAKNHQLVMQGDCNLVLYGGKYGWQSNTHGNGEHCFLRLNHKGELIIKDDDFRTIWSSSSSSKQGDYVLILQDDGFAVIYGPAIWETSSKRSIADVGEDDG.

The N-terminal stretch at 1-23 (MAKLLLFLLPAILGLLIPRSAVA) is a signal peptide. Bulb-type lectin domains follow at residues 26-131 (TNYL…PWVP) and 145-252 (DNLL…SKRS). Residues 51–55 (QNDCN), tyrosine 59, tryptophan 63, glutamine 64, 170–174 (QGDCN), tyrosine 178, and 182–185 (YGWQ) contribute to the beta-D-mannose site. The Carbohydrate-binding motif 1 motif lies at 51–59 (QNDCNLVLY). Cystine bridges form between cysteine 54/cysteine 74 and cysteine 173/cysteine 195. The Carbohydrate-binding motif 2 signature appears at 170-178 (QGDCNLVLY).

As to quaternary structure, forms heterotetramer of 2 chains 1 and 2 chains 2 arranged as a dimer of chain 1 and chain 2 heterodimers.

Mannose-specific lectin. Shows agglutinating activity towards erythrocytes from rabbit. This Colocasia esculenta (Wild taro) protein is Mannose-specific lectin 2.